The following is a 555-amino-acid chain: GMP synthase [glutamine-hydrolyzing] (555 aa).

A Glutamine amidotransferase type-1 domain is found at 8 to 234; the sequence is KILVLNFGSQ…AYNICKCKKQ (227 aa). Cysteine 89 serves as the catalytic Nucleophile; for GATase activity. Residues glutamine 93, asparagine 169, aspartate 172, and histidine 208 each contribute to the L-glutamine site. Active-site for GATase activity residues include histidine 208 and glutamate 210. The 196-residue stretch at 235–430 folds into the GMPS ATP-PPase domain; the sequence is FDPIRYHELE…LNLPEEITNR (196 aa). 262–268 contributes to the ATP binding site; the sequence is SGGIDST. Residues arginine 336, glutamine 476, lysine 547, isoleucine 552, and glutamate 553 each coordinate XMP.

In terms of assembly, homodimer (via the GMPS ATP-PPase domain). It depends on Mg(2+) as a cofactor.

The catalysed reaction is XMP + L-glutamine + ATP + H2O = GMP + L-glutamate + AMP + diphosphate + 2 H(+). It participates in purine metabolism; GMP biosynthesis; GMP from XMP (L-Gln route): step 1/1. The GATase domain is allosterically activated by the binding of substrates, ATP and XMP, to the ATPPase domain, thus ensuring that glutamine hydrolysis occurs only when the ATPPase domain is primed to receive ammonia. Inhibited by Na(+). Inhibited by the reaction product GMP. In terms of biological role, catalyzes the conversion of xanthine monophosphate (XMP) to GMP in the presence of glutamine and ATP through an adenyl-XMP intermediate, which is the final step of de novo synthesis of GMP. The conversion of XMP to GMP involves the coordinated action of the glutamine amidotransferase (GATase) domain that catalyzes the hydrolysis of the amide side chain of glutamine producing ammonia and the ATP pyrophosphatase (ATPPase) domain that catalyzes the synthesis of adenyl-XMP intermediate from ATP. The ammonia produced by the GATase domain is tunnelled to the ATP-PPase domain where it attacks the adenyl-XMP intermediate generating GMP. This Plasmodium falciparum (isolate 3D7) protein is GMP synthase [glutamine-hydrolyzing].